The sequence spans 593 residues: Salivary alpha-glucosidase (593 aa).

Residues 1–19 (MPPLGVLLLLVALGHSTQG) form the signal peptide. Residues D49, D51, D53, I55, D57, and N130 each coordinate Ca(2+). N-linked (GlcNAc...) asparagine glycosylation is found at N130 and N163. D201, Y235, L236, and E238 together coordinate Ca(2+). N-linked (GlcNAc...) asparagine glycans are attached at residues N295, N310, N338, N414, N445, and N453. N338 provides a ligand contact to N-acetyl-beta-D-glucosamine.

This sequence belongs to the glycosyl hydrolase 13 family. Saliva (at protein level). Proximal lateral lobes of the salivary gland (at protein level).

The protein resides in the secreted. The enzyme catalyses Hydrolysis of terminal, non-reducing (1-&gt;4)-linked alpha-D-glucose residues with release of alpha-D-glucose.. Functionally, functions as a glucosidase that shows high activity toward sucrose, a major component of nectar. Assists the mosquito in its sugar-feeding capabilities. This chain is Salivary alpha-glucosidase, found in Anopheles gambiae (African malaria mosquito).